The chain runs to 540 residues: MSVPAQTSVLIVGGGPAGSYAATVLAREGVDVVLLEAEKFPRYHIGESMLASIRFFLRFVELEEEFDRHGFEKKYGATFKITEKNPAYTDFAASLGEGGYSWNVVRSESDEIIFRYAGKCGAKTFDGTKVESLTFEPYPHEGFDESVHLANPGRPVSANWSRKDGSSGVIKFDYIIDGSGRNGLISTKYLKNRSFNQGLKNIANWTYWKGAKRFNVGEKNENSPLFEALKDGSGWVWAIPLHNDTISVGVVARQDAFFEKKKESGLSGEAFYKEYLKLAPQIKNELLRDATIVSDIKQATDWSYSASAYAGPNFRLIGDAGCFVDPYFSSGCHLAMTSALSASVSIQAVRRGQCDELTGAKWHTTKVAEGYTRFLLLVMTVQRQLRMKDKNIISTDEEEGFDMAFKKIQPVIQGVADTRTEDEQTQRRAAEAVDFSLESFEITPEKQAAVISKIERSQAEPELLEKLTPEEVHILGNIVNRTFEREKDELNLTHFTGDMIDGYSAKLEHGNIGLYKREKALLNGTASRAAAVLKSIHQVA.

Residues 1–21 form the signal peptide; sequence MSVPAQTSVLIVGGGPAGSYA. FAD is bound by residues glycine 14, alanine 17, and glutamate 47. N-linked (GlcNAc...) asparagine glycosylation is found at asparagine 159, asparagine 192, asparagine 204, and asparagine 243. Serine 330 and glycine 331 together coordinate chloride. N-linked (GlcNAc...) asparagine glycosylation is found at asparagine 480, asparagine 491, and asparagine 523.

It belongs to the flavin-dependent halogenase family.

The protein operates within secondary metabolite biosynthesis. Flavin-dependent halogenase; part of the gene cluster that mediates the biosynthesis of pestheic acid, a diphenyl ether which is a biosynthetic precursor of the unique chloropupukeananes. The biosynthesis initiates from condensation of acetate and malonate units catalyzed by the non-reducing PKS ptaA. As the ptaA protein is TE/CLC domain-deficient, hydrolysis and Claisen cyclization of the polyketide could be catalyzed by ptaB containing a beta-lactamase domain. The ptaB protein might hydrolyze the thioester bond between the ACP of ptaA and the intermediate to release atrochrysone carboxylic acid, which is spontaneously dehydrated to form endocrocin anthrone. Endocrocin anthrone is then converted to endocrocin, catalyzed by the anthrone oxygenase ptaC. Spontaneous decarboxylation of endocrocin occurs to generate emodin. An O-methyltransferase (ptaH or ptaI) could methylate emodin to form physcion. PtaJ could then catalyze the oxidative cleavage of physcion, and rotation of the intermediate could then afford desmethylisosulochrin. PtaF, a putative NADH-dependent oxidoreductase, might also participate in the oxidative cleavage step. Desmethylisosulochrin is then transformed by another O-methyltransferase (ptaH or ptaI) to form isosulochrin. Chlorination of isosulochrin by ptaM in the cyclohexadienone B ring then produces chloroisosulochrin. PtaE is responsible for the oxidative coupling reactions of both benzophenones isosulochrin and chloroisosulochrin to RES-1214-1 and pestheic acid respectively, regardless of chlorination. This Pestalotiopsis fici (strain W106-1 / CGMCC3.15140) protein is Flavin-dependent halogenase ptaM.